The primary structure comprises 474 residues: Trigger factor (474 aa).

Positions 171-258 (GDVAVIDFQG…LKELKTRDLP (88 aa)) constitute a PPIase FKBP-type domain. The tract at residues 441-474 (TEVDAASATVETTATETAEEAPEAPKAKKGKKKA) is disordered. A compositionally biased stretch (low complexity) spans 444 to 456 (DAASATVETTATE).

The protein belongs to the FKBP-type PPIase family. Tig subfamily.

Its subcellular location is the cytoplasm. It carries out the reaction [protein]-peptidylproline (omega=180) = [protein]-peptidylproline (omega=0). In terms of biological role, involved in protein export. Acts as a chaperone by maintaining the newly synthesized protein in an open conformation. Functions as a peptidyl-prolyl cis-trans isomerase. The sequence is that of Trigger factor from Synechococcus sp. (strain ATCC 27144 / PCC 6301 / SAUG 1402/1) (Anacystis nidulans).